Here is a 325-residue protein sequence, read N- to C-terminus: Biotin synthase (325 aa).

Positions 49-279 (VGDKVELCSI…DKNIRYAGGR (231 aa)) constitute a Radical SAM core domain. [4Fe-4S] cluster-binding residues include Cys66, Cys70, and Cys73. Residues Cys144, Cys204, and Arg274 each contribute to the [2Fe-2S] cluster site.

The protein belongs to the radical SAM superfamily. Biotin synthase family. In terms of assembly, homodimer. It depends on [4Fe-4S] cluster as a cofactor. [2Fe-2S] cluster is required as a cofactor.

It catalyses the reaction (4R,5S)-dethiobiotin + (sulfur carrier)-SH + 2 reduced [2Fe-2S]-[ferredoxin] + 2 S-adenosyl-L-methionine = (sulfur carrier)-H + biotin + 2 5'-deoxyadenosine + 2 L-methionine + 2 oxidized [2Fe-2S]-[ferredoxin]. Its pathway is cofactor biosynthesis; biotin biosynthesis; biotin from 7,8-diaminononanoate: step 2/2. In terms of biological role, catalyzes the conversion of dethiobiotin (DTB) to biotin by the insertion of a sulfur atom into dethiobiotin via a radical-based mechanism. This Carboxydothermus hydrogenoformans (strain ATCC BAA-161 / DSM 6008 / Z-2901) protein is Biotin synthase.